A 101-amino-acid polypeptide reads, in one-letter code: MAKISMINRDLKRKRLAKKFADKRLSLKKVISSDASSYEEKIEASCKLQKLPRDSSPTRLRNRCEISGRPRGVYCKFGLGRNKLREAAMRGDVPGLRKASW.

Belongs to the universal ribosomal protein uS14 family. In terms of assembly, part of the 30S ribosomal subunit. Contacts proteins S3 and S10.

Its function is as follows. Binds 16S rRNA, required for the assembly of 30S particles and may also be responsible for determining the conformation of the 16S rRNA at the A site. This chain is Small ribosomal subunit protein uS14, found in Xylella fastidiosa (strain 9a5c).